The sequence spans 327 residues: Protein EMSY-LIKE 1 (327 aa).

The ENT domain occupies 1–88 (METQIHQLEQ…HATIQPFDVL (88 aa)). Residues 32–58 (ESLITELRKELRVSDDEHRELLSRVNK) adopt a coiled-coil conformation. Disordered stretches follow at residues 206-257 (GHGS…SDDI) and 305-327 (ADTSDGEMDGDPPYSHDHPMPQG). The segment covering 214-232 (GNRRGQIHGGRGRGPRIHQ) has biased composition (basic residues). The stretch at 281 to 306 (LELDKAKKMLKEHEQALIAAIARLAD) forms a coiled coil. Position 308 is a phosphoserine (S308). Positions 318–327 (YSHDHPMPQG) are enriched in basic and acidic residues.

As to quaternary structure, isoform 1 interacts with EDM2 in nucleus.

Its subcellular location is the nucleus. Its function is as follows. Probably involved in the regulation of chromatin states. Contributes to RPP7-mediated and basal immunity, especially against Hyaloperonospora arabidopsidis isolate Hiks1. Regulates negatively EDM2-dependent floral transition. This is Protein EMSY-LIKE 1 from Arabidopsis thaliana (Mouse-ear cress).